We begin with the raw amino-acid sequence, 160 residues long: SsrA-binding protein (160 aa).

A disordered region spans residues 131 to 160 (KKEYDKRHTERERDSDRELQRAVRSKGKDD).

This sequence belongs to the SmpB family.

It localises to the cytoplasm. Functionally, required for rescue of stalled ribosomes mediated by trans-translation. Binds to transfer-messenger RNA (tmRNA), required for stable association of tmRNA with ribosomes. tmRNA and SmpB together mimic tRNA shape, replacing the anticodon stem-loop with SmpB. tmRNA is encoded by the ssrA gene; the 2 termini fold to resemble tRNA(Ala) and it encodes a 'tag peptide', a short internal open reading frame. During trans-translation Ala-aminoacylated tmRNA acts like a tRNA, entering the A-site of stalled ribosomes, displacing the stalled mRNA. The ribosome then switches to translate the ORF on the tmRNA; the nascent peptide is terminated with the 'tag peptide' encoded by the tmRNA and targeted for degradation. The ribosome is freed to recommence translation, which seems to be the essential function of trans-translation. The protein is SsrA-binding protein of Pseudomonas syringae pv. syringae (strain B728a).